Here is a 295-residue protein sequence, read N- to C-terminus: Small ribosomal subunit protein uS2 (295 aa).

The disordered stretch occupies residues 232–295 (RRRGTDEKPE…DEQPAAAAAE (64 aa)). The segment covering 252-287 (EWERELLEEPKKSDEQPAKSDELPVKTDEQPTKSDE) has biased composition (basic and acidic residues).

Belongs to the universal ribosomal protein uS2 family.

In Salinispora tropica (strain ATCC BAA-916 / DSM 44818 / JCM 13857 / NBRC 105044 / CNB-440), this protein is Small ribosomal subunit protein uS2.